Consider the following 103-residue polypeptide: NAD(P)H-quinone oxidoreductase subunit 4L (103 aa).

3 helical membrane passes run 5–25 (LQYC…GLIT), 32–52 (VLMS…GFSN), and 66–86 (IFVI…VLAI).

The protein belongs to the complex I subunit 4L family. In terms of assembly, NDH-1 can be composed of about 15 different subunits; different subcomplexes with different compositions have been identified which probably have different functions.

It localises to the cellular thylakoid membrane. The enzyme catalyses a plastoquinone + NADH + (n+1) H(+)(in) = a plastoquinol + NAD(+) + n H(+)(out). It carries out the reaction a plastoquinone + NADPH + (n+1) H(+)(in) = a plastoquinol + NADP(+) + n H(+)(out). Its function is as follows. NDH-1 shuttles electrons from an unknown electron donor, via FMN and iron-sulfur (Fe-S) centers, to quinones in the respiratory and/or the photosynthetic chain. The immediate electron acceptor for the enzyme in this species is believed to be plastoquinone. Couples the redox reaction to proton translocation, and thus conserves the redox energy in a proton gradient. Cyanobacterial NDH-1 also plays a role in inorganic carbon-concentration. The chain is NAD(P)H-quinone oxidoreductase subunit 4L from Synechocystis sp. (strain ATCC 27184 / PCC 6803 / Kazusa).